Here is a 168-residue protein sequence, read N- to C-terminus: ATP synthase F(1) complex subunit delta, mitochondrial (168 aa).

Residues 1-22 constitute a mitochondrion transit peptide; sequence MLPAALLRRPGLGRLVRHARAY. Lys136 and Lys165 each carry N6-acetyllysine; alternate. 2 positions are modified to N6-succinyllysine; alternate: Lys136 and Lys165.

Belongs to the ATPase epsilon chain family. Component of the ATP synthase complex composed at least of ATP5F1A/subunit alpha, ATP5F1B/subunit beta, ATP5MC1/subunit c (homooctomer), MT-ATP6/subunit a, MT-ATP8/subunit 8, ATP5ME/subunit e, ATP5MF/subunit f, ATP5MG/subunit g, ATP5MK/subunit k, ATP5MJ/subunit j, ATP5F1C/subunit gamma, ATP5F1D/subunit delta, ATP5F1E/subunit epsilon, ATP5PF/subunit F6, ATP5PB/subunit b, ATP5PD/subunit d, ATP5PO/subunit OSCP. ATP synthase complex consists of a soluble F(1) head domain (subunits alpha(3) and beta(3)) - the catalytic core - and a membrane F(0) domain - the membrane proton channel (subunits c, a, 8, e, f, g, k and j). These two domains are linked by a central stalk (subunits gamma, delta, and epsilon) rotating inside the F1 region and a stationary peripheral stalk (subunits F6, b, d, and OSCP). Component of a complex composed at least by ATPIF1, ATP5F1A, ATP5F1B, ATP5F1C AND ATP5F1E.

Its subcellular location is the mitochondrion. It localises to the mitochondrion inner membrane. Functionally, subunit delta, of the mitochondrial membrane ATP synthase complex (F(1)F(0) ATP synthase or Complex V) that produces ATP from ADP in the presence of a proton gradient across the membrane which is generated by electron transport complexes of the respiratory chain. ATP synthase complex consist of a soluble F(1) head domain - the catalytic core - and a membrane F(1) domain - the membrane proton channel. These two domains are linked by a central stalk rotating inside the F(1) region and a stationary peripheral stalk. During catalysis, ATP synthesis in the catalytic domain of F(1) is coupled via a rotary mechanism of the central stalk subunits to proton translocation. In vivo, can only synthesize ATP although its ATP hydrolase activity can be activated artificially in vitro. With the central stalk subunit gamma, is essential for the biogenesis of F(1) catalytic part of the ATP synthase complex namely in the formation of F1 assembly intermediate. The sequence is that of ATP synthase F(1) complex subunit delta, mitochondrial from Homo sapiens (Human).